An 830-amino-acid polypeptide reads, in one-letter code: Periplasmic nitrate reductase (830 aa).

Positions 1-32 form a signal peptide, tat-type signal; the sequence is MELNRRDFMKANAAVAAAAAAGITIPVKNVHA. In terms of domain architecture, 4Fe-4S Mo/W bis-MGD-type spans 39–95; that stretch reads IRWDKAPCRYCGTGCSVLVGTKDGRVVATQGDPDAEVNRGLNCIKGYFLSKIMYGAD. [4Fe-4S] cluster-binding residues include cysteine 46, cysteine 49, cysteine 53, and cysteine 81. Residues lysine 83, glutamine 151, asparagine 176, cysteine 180, 213–220, 244–248, methionine 374, glutamine 378, asparagine 484, 510–511, lysine 533, aspartate 560, and 720–729 each bind Mo-bis(molybdopterin guanine dinucleotide); these read WGSNMAEM, STFEH, SD, and TGRVLEHWHT. Phenylalanine 796 is a substrate binding site. Mo-bis(molybdopterin guanine dinucleotide) is bound by residues asparagine 804 and lysine 821.

This sequence belongs to the prokaryotic molybdopterin-containing oxidoreductase family. NasA/NapA/NarB subfamily. As to quaternary structure, component of the periplasmic nitrate reductase NapAB complex composed of NapA and NapB. [4Fe-4S] cluster is required as a cofactor. The cofactor is Mo-bis(molybdopterin guanine dinucleotide). Predicted to be exported by the Tat system. The position of the signal peptide cleavage has not been experimentally proven.

It localises to the periplasm. It catalyses the reaction 2 Fe(II)-[cytochrome] + nitrate + 2 H(+) = 2 Fe(III)-[cytochrome] + nitrite + H2O. Catalytic subunit of the periplasmic nitrate reductase complex NapAB. Receives electrons from NapB and catalyzes the reduction of nitrate to nitrite. In Mannheimia succiniciproducens (strain KCTC 0769BP / MBEL55E), this protein is Periplasmic nitrate reductase.